A 92-amino-acid polypeptide reads, in one-letter code: Small ribosomal subunit protein bS18 (92 aa).

This sequence belongs to the bacterial ribosomal protein bS18 family. As to quaternary structure, part of the 30S ribosomal subunit. Forms a tight heterodimer with protein bS6.

Functionally, binds as a heterodimer with protein bS6 to the central domain of the 16S rRNA, where it helps stabilize the platform of the 30S subunit. The sequence is that of Small ribosomal subunit protein bS18 from Chlorobium chlorochromatii (strain CaD3).